The sequence spans 858 residues: Bifunctional uridylyltransferase/uridylyl-removing enzyme (858 aa).

The uridylyltransferase stretch occupies residues 1–324 (MSASVAEPPP…PATSGVTRVL (324 aa)). Positions 325–681 (SPGRFVEKQG…ARPSPVGDAL (357 aa)) are uridylyl-removing. One can recognise an HD domain in the interval 443-565 (VDQHILMVLR…VGSERRLTAL (123 aa)). 2 consecutive ACT domains span residues 682–761 (QVLV…PEPS) and 790–858 (ILSV…AIAV).

This sequence belongs to the GlnD family. It depends on Mg(2+) as a cofactor.

It catalyses the reaction [protein-PII]-L-tyrosine + UTP = [protein-PII]-uridylyl-L-tyrosine + diphosphate. The catalysed reaction is [protein-PII]-uridylyl-L-tyrosine + H2O = [protein-PII]-L-tyrosine + UMP + H(+). With respect to regulation, uridylyltransferase (UTase) activity is inhibited by glutamine, while glutamine activates uridylyl-removing (UR) activity. Modifies, by uridylylation and deuridylylation, the PII regulatory proteins (GlnB and homologs), in response to the nitrogen status of the cell that GlnD senses through the glutamine level. Under low glutamine levels, catalyzes the conversion of the PII proteins and UTP to PII-UMP and PPi, while under higher glutamine levels, GlnD hydrolyzes PII-UMP to PII and UMP (deuridylylation). Thus, controls uridylylation state and activity of the PII proteins, and plays an important role in the regulation of nitrogen assimilation and metabolism. The chain is Bifunctional uridylyltransferase/uridylyl-removing enzyme from Burkholderia mallei (strain NCTC 10247).